The sequence spans 77 residues: U8-lycotoxin-Ls1o (77 aa).

The signal sequence occupies residues 1–20; sequence MKLMIFTGLVLFAIVSLIEA. Residues 21–26 constitute a propeptide that is removed on maturation; it reads QAENGK.

This sequence belongs to the neurotoxin 19 (CSTX) family. 08 (U8-Lctx) subfamily. Contains 4 disulfide bonds. As to expression, expressed by the venom gland.

It is found in the secreted. This is U8-lycotoxin-Ls1o from Lycosa singoriensis (Wolf spider).